A 273-amino-acid chain; its full sequence is Dermonecrotic toxin LsaSicTox-alphaIB1aii (273 aa).

Histidine 5 is an active-site residue. Glutamate 25 and aspartate 27 together coordinate Mg(2+). Catalysis depends on histidine 41, which acts as the Nucleophile. Disulfide bonds link cysteine 45–cysteine 51 and cysteine 47–cysteine 190. Aspartate 85 serves as a coordination point for Mg(2+).

The protein belongs to the arthropod phospholipase D family. Class II subfamily. It depends on Mg(2+) as a cofactor. As to expression, expressed by the venom gland.

The protein resides in the secreted. It carries out the reaction an N-(acyl)-sphingosylphosphocholine = an N-(acyl)-sphingosyl-1,3-cyclic phosphate + choline. It catalyses the reaction an N-(acyl)-sphingosylphosphoethanolamine = an N-(acyl)-sphingosyl-1,3-cyclic phosphate + ethanolamine. The catalysed reaction is a 1-acyl-sn-glycero-3-phosphocholine = a 1-acyl-sn-glycero-2,3-cyclic phosphate + choline. The enzyme catalyses a 1-acyl-sn-glycero-3-phosphoethanolamine = a 1-acyl-sn-glycero-2,3-cyclic phosphate + ethanolamine. Its function is as follows. Dermonecrotic toxins cleave the phosphodiester linkage between the phosphate and headgroup of certain phospholipids (sphingolipid and lysolipid substrates), forming an alcohol (often choline) and a cyclic phosphate. This toxin acts on sphingomyelin (SM). It may also act on ceramide phosphoethanolamine (CPE), lysophosphatidylcholine (LPC) and lysophosphatidylethanolamine (LPE), but not on lysophosphatidylserine (LPS), and lysophosphatidylglycerol (LPG). It acts by transphosphatidylation, releasing exclusively cyclic phosphate products as second products. Induces dermonecrosis, hemolysis, increased vascular permeability, edema, inflammatory response, and platelet aggregation. The polypeptide is Dermonecrotic toxin LsaSicTox-alphaIB1aii (Loxosceles sabina (Tucson recluse spider)).